The chain runs to 116 residues: Large ribosomal subunit protein bL19 (116 aa).

Belongs to the bacterial ribosomal protein bL19 family.

Its function is as follows. This protein is located at the 30S-50S ribosomal subunit interface and may play a role in the structure and function of the aminoacyl-tRNA binding site. This chain is Large ribosomal subunit protein bL19, found in Pseudomonas fluorescens (strain ATCC BAA-477 / NRRL B-23932 / Pf-5).